The primary structure comprises 709 residues: Coiled-coil domain-containing protein 13 (709 aa).

Coiled-coil stretches lie at residues 70-97, 139-178, and 206-288; these read IFEKRVLEDEIQHLRSELRETVDENGRL, ELSKKNRGLMAESESAKVRIKQLTNRIQELEHQLQMASAK, and EVKA…QRQN. Ser258 is modified (phosphoserine). The segment at 281 to 312 is disordered; it reads KQLGQRQNKPAGSSSSEVPLSSDSRKMTAQEK. A compositionally biased stretch (low complexity) spans 293 to 302; it reads SSSSEVPLSS. A coiled-coil region spans residues 323–457; it reads DKQESWEKLA…ELEIGQLSVQ (135 aa). Disordered stretches follow at residues 462-499, 512-542, and 600-641; these read KGGGEGASPADARFPEDQTPITNSPASAGDHVGRLGSS, SALTRPSLPSPHGTSPRFSDSPEQKGWQAQA, and KMRL…SSTQ. 2 positions are modified to phosphoserine: Ser469 and Ser532. Residues 539–604 are a coiled coil; the sequence is QAQAAEMKAL…EQHLEKMRLE (66 aa).

Interacts with PCM1, CEP290 and PCNT.

The protein resides in the cytoplasm. It is found in the cytoskeleton. The protein localises to the microtubule organizing center. Its subcellular location is the centrosome. It localises to the centriolar satellite. The protein resides in the cilium basal body. Required for primary cilia formation and promotes the localization of the ciliopathy protein BBS4 to both centriolar satellites and cilia. The protein is Coiled-coil domain-containing protein 13 of Mus musculus (Mouse).